A 143-amino-acid polypeptide reads, in one-letter code: NADH-quinone oxidoreductase subunit A (143 aa).

3 helical membrane passes run 8 to 28 (FGNV…GYLT), 63 to 83 (FYVV…LFPW), and 93 to 113 (FALV…VYAW).

It belongs to the complex I subunit 3 family. In terms of assembly, NDH-1 is composed of 14 different subunits. Subunits NuoA, H, J, K, L, M, N constitute the membrane sector of the complex.

It localises to the cell inner membrane. It catalyses the reaction a quinone + NADH + 5 H(+)(in) = a quinol + NAD(+) + 4 H(+)(out). NDH-1 shuttles electrons from NADH, via FMN and iron-sulfur (Fe-S) centers, to quinones in the respiratory chain. The immediate electron acceptor for the enzyme in this species is believed to be a menaquinone. Couples the redox reaction to proton translocation (for every two electrons transferred, four hydrogen ions are translocated across the cytoplasmic membrane), and thus conserves the redox energy in a proton gradient. The polypeptide is NADH-quinone oxidoreductase subunit A (Chlorobium phaeovibrioides (strain DSM 265 / 1930) (Prosthecochloris vibrioformis (strain DSM 265))).